We begin with the raw amino-acid sequence, 150 residues long: Endoribonuclease YbeY (150 aa).

The Zn(2+) site is built by histidine 116, histidine 120, and histidine 126.

The protein belongs to the endoribonuclease YbeY family. The cofactor is Zn(2+).

It localises to the cytoplasm. In terms of biological role, single strand-specific metallo-endoribonuclease involved in late-stage 70S ribosome quality control and in maturation of the 3' terminus of the 16S rRNA. The protein is Endoribonuclease YbeY of Mesomycoplasma hyopneumoniae (strain 232) (Mycoplasma hyopneumoniae).